The chain runs to 216 residues: Acyl-homoserine-lactone synthase (216 aa).

Belongs to the autoinducer synthase family.

It catalyses the reaction a fatty acyl-[ACP] + S-adenosyl-L-methionine = an N-acyl-L-homoserine lactone + S-methyl-5'-thioadenosine + holo-[ACP] + H(+). Its function is as follows. Required for the synthesis of OHHL (N-(3-oxohexanoyl)-L-homoserine lactone), an autoinducer molecule which binds to CarR and thus acts in the control of the biosynthesis of carbapenem antibiotics. This Pectobacterium carotovorum subsp. carotovorum (Erwinia carotovora subsp. carotovora) protein is Acyl-homoserine-lactone synthase (carI).